Reading from the N-terminus, the 164-residue chain is Ribosome maturation factor RimM (164 aa).

In terms of domain architecture, PRC barrel spans 90–161; the sequence is KGSYFIADLI…TVTIKPLEIW (72 aa).

Belongs to the RimM family. Binds ribosomal protein uS19.

Its subcellular location is the cytoplasm. An accessory protein needed during the final step in the assembly of 30S ribosomal subunit, possibly for assembly of the head region. Essential for efficient processing of 16S rRNA. May be needed both before and after RbfA during the maturation of 16S rRNA. It has affinity for free ribosomal 30S subunits but not for 70S ribosomes. This is Ribosome maturation factor RimM from Clostridium botulinum (strain Langeland / NCTC 10281 / Type F).